A 516-amino-acid polypeptide reads, in one-letter code: 2-isopropylmalate synthase (516 aa).

The Pyruvate carboxyltransferase domain maps to 5-267; the sequence is IIIFDTTLRD…STDINIKEIH (263 aa). Asp-14, His-202, His-204, and Asn-238 together coordinate Mn(2+). Residues 393–516 form a regulatory domain region; sequence KLEYFDVQSK…VNKELERLQK (124 aa).

It belongs to the alpha-IPM synthase/homocitrate synthase family. LeuA type 1 subfamily. As to quaternary structure, homodimer. Mn(2+) is required as a cofactor.

The protein localises to the cytoplasm. It catalyses the reaction 3-methyl-2-oxobutanoate + acetyl-CoA + H2O = (2S)-2-isopropylmalate + CoA + H(+). The protein operates within amino-acid biosynthesis; L-leucine biosynthesis; L-leucine from 3-methyl-2-oxobutanoate: step 1/4. In terms of biological role, catalyzes the condensation of the acetyl group of acetyl-CoA with 3-methyl-2-oxobutanoate (2-ketoisovalerate) to form 3-carboxy-3-hydroxy-4-methylpentanoate (2-isopropylmalate). The polypeptide is 2-isopropylmalate synthase (Buchnera aphidicola subsp. Cinara cedri (strain Cc)).